The following is a 307-amino-acid chain: Putative serpin A13 (307 aa).

Residues 1–21 form the signal peptide; sequence MEASRWWLLVTVLMAGAHCVA. Asn-150 and Asn-250 each carry an N-linked (GlcNAc...) asparagine glycan.

The protein belongs to the serpin family.

It localises to the secreted. This chain is Putative serpin A13 (SERPINA13P), found in Homo sapiens (Human).